We begin with the raw amino-acid sequence, 347 residues long: Cyclic AMP-dependent transcription factor ATF-4 (347 aa).

A disordered region spans residues 202-296 (TPQCVKEEDT…AATRYRQKKR (95 aa)). Thr211 carries the phosphothreonine modification. 5 positions are modified to phosphoserine: Ser213, Ser217, Ser222, Ser229, and Ser233. The BetaTrCP degron motif signature appears at 213 to 222 (SDSDSGICMS). Residues 228 to 238 (GSPQHSPSTSR) show a composition bias toward polar residues. Pro234 carries the 4-hydroxyproline modification. Phosphoserine is present on residues Ser243 and Ser246. Glycyl lysine isopeptide (Lys-Gly) (interchain with G-Cter in SUMO2) cross-links involve residues Lys256 and Lys268. The span at 269–283 (VKTEKLDKKLKKMEQ) shows a compositional bias: basic and acidic residues. A bZIP domain is found at 274–337 (LDKKLKKMEQ…QYLKDLIEEV (64 aa)). Positions 276–296 (KKLKKMEQNKTAATRYRQKKR) are basic motif. The tract at residues 301–337 (ALTGECKELEKKNEALKEKADSLAKEIQYLKDLIEEV) is interaction with GABBR1. Residues 302–330 (LTGECKELEKKNEALKEKADSLAKEIQYL) form a leucine-zipper region. At Lys307 the chain carries N6-acetyllysine.

The protein belongs to the bZIP family. In terms of assembly, binds DNA as a homodimer and as a heterodimer. Heterodimer; heterodimerizes with CEBPB. Heterodimer; heterodimerizes with DDIT3/CHOP. Interacts with CEP290 (via an N-terminal region). Interacts with NEK6, DAPK2 (isoform 2) and ZIPK/DAPK3. Interacts (via its leucine zipper domain) with GABBR1 and GABBR2 (via their C-termini). Forms a heterodimer with TXLNG in osteoblasts. Interacts (via its DNA binding domain) with FOXO1 (C-terminal half); the interaction occurs in osteoblasts and regulates glucose homeostasis through suppression of beta-cell proliferation and a decrease in insulin production. Interacts with SATB2; the interaction results in enhanced DNA binding and transactivation by these transcription factors. Interacts with ABRAXAS2. Interacts with TRIB3, inhibiting the transactivation activity of ATF4. Interacts with DISC1; which inhibits ATF4 transcription factor activity by disrupting ATF4 dimerization and DNA-binding. Interacts with EP300/p300; EP300/p300 stabilizes ATF4 and increases its transcriptional activity independently of its catalytic activity by preventing its ubiquitination. Post-translationally, ubiquitinated by SCF(BTRC) in response to mTORC1 signal, followed by proteasomal degradation and leading to down-regulate expression of SIRT4. Interaction with EP300/p300 inhibits ubiquitination by SCF(BTRC). In terms of processing, phosphorylation at Ser-243 by RPS6KA3/RSK2 in osteoblasts enhances transactivation activity and promotes osteoblast differentiation. Phosphorylated on the betaTrCP degron motif at Ser-217, followed by phosphorylation at Thr-211, Ser-222, Ser-229, Ser-233 and Ser-246, promoting interaction with BTRC and ubiquitination. Phosphorylation is promoted by mTORC1. Phosphorylation at Ser-213 by CK2 decreases its stability. Phosphorylated by NEK6. Hydroxylated by PHD3, leading to decreased protein stability. Expressed in brain, heart, liver, spleen, lung and muscle, but not testis.

It is found in the nucleus. The protein resides in the nucleus speckle. It localises to the cytoplasm. Its subcellular location is the cell membrane. The protein localises to the cytoskeleton. It is found in the microtubule organizing center. The protein resides in the centrosome. Functionally, transcription factor that binds the cAMP response element (CRE) (consensus: 5'-GTGACGT[AC][AG]-3') and displays two biological functions, as regulator of metabolic and redox processes under normal cellular conditions, and as master transcription factor during integrated stress response (ISR). Binds to asymmetric CRE's as a heterodimer and to palindromic CRE's as a homodimer. Core effector of the ISR, which is required for adaptation to various stress such as endoplasmic reticulum (ER) stress, amino acid starvation, mitochondrial stress or oxidative stress. During ISR, ATF4 translation is induced via an alternative ribosome translation re-initiation mechanism in response to EIF2S1/eIF-2-alpha phosphorylation, and stress-induced ATF4 acts as a master transcription factor of stress-responsive genes in order to promote cell recovery. Promotes the transcription of genes linked to amino acid sufficiency and resistance to oxidative stress to protect cells against metabolic consequences of ER oxidation. Activates the transcription of NLRP1, possibly in concert with other factors in response to ER stress. Activates the transcription of asparagine synthetase (ASNS) in response to amino acid deprivation or ER stress. However, when associated with DDIT3/CHOP, the transcriptional activation of the ASNS gene is inhibited in response to amino acid deprivation. Together with DDIT3/CHOP, mediates programmed cell death by promoting the expression of genes involved in cellular amino acid metabolic processes, mRNA translation and the terminal unfolded protein response (terminal UPR), a cellular response that elicits programmed cell death when ER stress is prolonged and unresolved. Activates the expression of COX7A2L/SCAF1 downstream of the EIF2AK3/PERK-mediated unfolded protein response, thereby promoting formation of respiratory chain supercomplexes and increasing mitochondrial oxidative phosphorylation. Together with DDIT3/CHOP, activates the transcription of the IRS-regulator TRIB3 and promotes ER stress-induced neuronal cell death by regulating the expression of BBC3/PUMA in response to ER stress. May cooperate with the UPR transcriptional regulator QRICH1 to regulate ER protein homeostasis which is critical for cell viability in response to ER stress. In the absence of stress, ATF4 translation is at low levels and it is required for normal metabolic processes such as embryonic lens formation, fetal liver hematopoiesis, bone development and synaptic plasticity. Acts as a regulator of osteoblast differentiation in response to phosphorylation by RPS6KA3/RSK2: phosphorylation in osteoblasts enhances transactivation activity and promotes expression of osteoblast-specific genes and post-transcriptionally regulates the synthesis of Type I collagen, the main constituent of the bone matrix. Cooperates with FOXO1 in osteoblasts to regulate glucose homeostasis through suppression of beta-cell production and decrease in insulin production. Activates transcription of SIRT4. Regulates the circadian expression of the core clock component PER2 and the serotonin transporter SLC6A4. Binds in a circadian time-dependent manner to the cAMP response elements (CRE) in the SLC6A4 and PER2 promoters and periodically activates the transcription of these genes. Mainly acts as a transcriptional activator in cellular stress adaptation, but it can also act as a transcriptional repressor: acts as a regulator of synaptic plasticity by repressing transcription, thereby inhibiting induction and maintenance of long-term memory. Regulates synaptic functions via interaction with DISC1 in neurons, which inhibits ATF4 transcription factor activity by disrupting ATF4 dimerization and DNA-binding. The polypeptide is Cyclic AMP-dependent transcription factor ATF-4 (Rattus norvegicus (Rat)).